The following is a 445-amino-acid chain: GTPase Der (445 aa).

EngA-type G domains follow at residues 3 to 167 (PVIA…YAGQ) and 180 to 353 (VKIA…AAAM). Residues 9 to 16 (GRPNVGKS), 56 to 60 (DTGGF), 119 to 122 (NKAE), 186 to 193 (GRPNVGKS), 233 to 237 (DTAGL), and 298 to 301 (NKWD) each bind GTP. A KH-like domain is found at 354 to 438 (AKLPTPKLTR…PLRIEFRSST (85 aa)).

The protein belongs to the TRAFAC class TrmE-Era-EngA-EngB-Septin-like GTPase superfamily. EngA (Der) GTPase family. Associates with the 50S ribosomal subunit.

Its function is as follows. GTPase that plays an essential role in the late steps of ribosome biogenesis. The polypeptide is GTPase Der (Paraburkholderia xenovorans (strain LB400)).